The following is a 162-amino-acid chain: Proepiregulin (162 aa).

Positions M1 to A22 are cleaved as a signal peptide. The propeptide occupies V23–Q55. N40 carries N-linked (GlcNAc...) asparagine glycosylation. Over V53–V112 the chain is Extracellular. The EGF-like domain occupies Q57–E97. Disulfide bonds link C61–C74, C69–C85, and C87–C96. Residues T102–V162 constitute a propeptide, removed in mature form. Residues A113 to F133 form a helical membrane-spanning segment. Over C134–V162 the chain is Cytoplasmic.

As to quaternary structure, interacts with EGFR and ERBB4.

It localises to the secreted. The protein localises to the extracellular space. Its subcellular location is the cell membrane. Its function is as follows. Ligand of the EGF receptor/EGFR and ERBB4. Stimulates EGFR and ERBB4 tyrosine phosphorylation. Contributes to inflammation, wound healing, tissue repair, and oocyte maturation by regulating angiogenesis and vascular remodeling and by stimulating cell proliferation. The protein is Proepiregulin (Ereg) of Mus musculus (Mouse).